A 145-amino-acid polypeptide reads, in one-letter code: Bacilliredoxin SAR1441 (145 aa).

The protein belongs to the bacilliredoxin family.

This chain is Bacilliredoxin SAR1441, found in Staphylococcus aureus (strain MRSA252).